The chain runs to 875 residues: Metal transporter CNNM2 (875 aa).

The Extracellular segment spans residues 1–250; it reads MIGCGACEPE…TKMIVGEEKK (250 aa). Asn112 carries N-linked (GlcNAc...) asparagine glycosylation. The disordered stretch occupies residues 121-149; that stretch reads TEHERRRHTPSERGLGGPAPPEPDSGPQR. A helical transmembrane segment spans residues 251 to 271; the sequence is FLLPFWLQVIFISLLLCLSGM. A CNNM transmembrane domain is found at 251–431; that stretch reads FLLPFWLQVI…DPYNDLVKEE (181 aa). Topologically, residues 272 to 313 are cytoplasmic; sequence FSGLNLGLMALDPMELRIVQNCGTEKEKNYAKRIEPVRRQGN. The helical intramembrane region spans 314–334; that stretch reads YLLCSLLLGNVLVNTTLTILL. Over 335–338 the chain is Cytoplasmic; the sequence is DDIA. Residues 339-359 traverse the membrane as a helical segment; it reads GSGLVAVVVSTIGIVIFGEIV. At 360–368 the chain is on the extracellular side; it reads PQAICSRHG. A helical transmembrane segment spans residues 369 to 389; that stretch reads LAVGANTIFLTKFFMMMTFPA. Topologically, residues 390–875 are cytoplasmic; the sequence is SYPVSKLLDC…NHSLHSEGAI (486 aa). CBS domains are found at residues 450–511 and 518–584; these read MTPL…CTPL and YNHP…ILDE. The segment at 741–763 is disordered; the sequence is AGSPGENKSPPRPCGLNHSDSLS. Ser761 bears the Phosphoserine mark.

This sequence belongs to the ACDP family. In terms of assembly, isoform 1 and isoform 2 may interact with each other. In terms of processing, the N-terminus is cleaved within the endoplasmic reticulum. The signal peptidase complex seems to be involved in the processing, but the exact cleavage site has not been identified. As to expression, widely expressed, with highest levels in kidney, lung, spleen and testis. In the kidney, predominantly expressed in the distal convoluted tubule and, at lower levels, in the connecting tubule (at protein level).

It localises to the cell membrane. Its function is as follows. Divalent metal cation transporter. Mediates transport of divalent metal cations in an order of Mg(2+) &gt; Co(2+) &gt; Mn(2+) &gt; Sr(2+) &gt; Ba(2+) &gt; Cu(2+) &gt; Fe(2+). The protein is Metal transporter CNNM2 (Cnnm2) of Mus musculus (Mouse).